A 35-amino-acid polypeptide reads, in one-letter code: Coenzyme PQQ synthesis protein A (35 aa).

The segment at residues 16–20 is a cross-link (pyrroloquinoline quinone (Glu-Tyr)); the sequence is EINMY.

This sequence belongs to the PqqA family.

It functions in the pathway cofactor biosynthesis; pyrroloquinoline quinone biosynthesis. Its function is as follows. Required for coenzyme pyrroloquinoline quinone (PQQ) biosynthesis. PQQ is probably formed by cross-linking a specific glutamate to a specific tyrosine residue and excising these residues from the peptide. In Roseobacter denitrificans (strain ATCC 33942 / OCh 114) (Erythrobacter sp. (strain OCh 114)), this protein is Coenzyme PQQ synthesis protein A.